The following is a 238-amino-acid chain: Probable transcriptional regulatory protein SMU_1789c (238 aa).

The protein belongs to the TACO1 family. YeeN subfamily.

It localises to the cytoplasm. The polypeptide is Probable transcriptional regulatory protein SMU_1789c (Streptococcus mutans serotype c (strain ATCC 700610 / UA159)).